The primary structure comprises 1598 residues: Pentafunctional AROM polypeptide (1598 aa).

The tract at residues 1-384 (MGVPTKISIL…YEPRASTVSN (384 aa)) is 3-dehydroquinate synthase. Residues 44 to 46 (DTN), 81 to 84 (ESSK), 114 to 116 (GGV), and Asp-119 each bind NAD(+). Residue Arg-130 participates in 7-phospho-2-dehydro-3-deoxy-D-arabino-heptonate binding. 139–140 (TT) is an NAD(+) binding site. 2 residues coordinate 7-phospho-2-dehydro-3-deoxy-D-arabino-heptonate: Asp-146 and Lys-152. Lys-161 serves as a coordination point for NAD(+). Position 162 (Asn-162) interacts with 7-phospho-2-dehydro-3-deoxy-D-arabino-heptonate. NAD(+) is bound by residues 179–182 (FLNT) and Asn-190. Position 194 (Glu-194) interacts with Zn(2+). 7-phospho-2-dehydro-3-deoxy-D-arabino-heptonate is bound by residues 194–197 (EVIK) and Lys-250. Catalysis depends on Glu-260, which acts as the Proton acceptor; for 3-dehydroquinate synthase activity. 7-phospho-2-dehydro-3-deoxy-D-arabino-heptonate contacts are provided by residues 264-268 (RNLLN) and His-271. Residue His-271 participates in Zn(2+) binding. The active-site Proton acceptor; for 3-dehydroquinate synthase activity is the His-275. Residues His-287 and Lys-356 each coordinate 7-phospho-2-dehydro-3-deoxy-D-arabino-heptonate. His-287 provides a ligand contact to Zn(2+). The EPSP synthase stretch occupies residues 397–842 (VYPGFPKSLN…WNTLAQTFKV (446 aa)). Residue Cys-824 is the For EPSP synthase activity of the active site. Residues 867–1059 (AASIFIIGMR…RRKENTFFVS (193 aa)) are shikimate kinase. Residue 874–881 (GMRGAGKT) coordinates ATP. The tract at residues 1060-1280 (LTFPDLTPAS…AAPGQLSARE (221 aa)) is 3-dehydroquinase. The active-site Proton acceptor; for 3-dehydroquinate dehydratase activity is His-1183. The Schiff-base intermediate with substrate; for 3-dehydroquinate dehydratase activity role is filled by Lys-1211. The interval 1293–1598 (AKKFAVIGKP…GVSSSDDTIS (306 aa)) is shikimate dehydrogenase.

The protein in the N-terminal section; belongs to the sugar phosphate cyclases superfamily. Dehydroquinate synthase family. It in the 2nd section; belongs to the EPSP synthase family. This sequence in the 3rd section; belongs to the shikimate kinase family. In the 4th section; belongs to the type-I 3-dehydroquinase family. The protein in the C-terminal section; belongs to the shikimate dehydrogenase family. Homodimer. Zn(2+) serves as cofactor.

Its subcellular location is the cytoplasm. It catalyses the reaction 7-phospho-2-dehydro-3-deoxy-D-arabino-heptonate = 3-dehydroquinate + phosphate. The enzyme catalyses 3-dehydroquinate = 3-dehydroshikimate + H2O. The catalysed reaction is shikimate + NADP(+) = 3-dehydroshikimate + NADPH + H(+). It carries out the reaction shikimate + ATP = 3-phosphoshikimate + ADP + H(+). It catalyses the reaction 3-phosphoshikimate + phosphoenolpyruvate = 5-O-(1-carboxyvinyl)-3-phosphoshikimate + phosphate. The protein operates within metabolic intermediate biosynthesis; chorismate biosynthesis; chorismate from D-erythrose 4-phosphate and phosphoenolpyruvate: step 2/7. Its pathway is metabolic intermediate biosynthesis; chorismate biosynthesis; chorismate from D-erythrose 4-phosphate and phosphoenolpyruvate: step 3/7. It functions in the pathway metabolic intermediate biosynthesis; chorismate biosynthesis; chorismate from D-erythrose 4-phosphate and phosphoenolpyruvate: step 4/7. It participates in metabolic intermediate biosynthesis; chorismate biosynthesis; chorismate from D-erythrose 4-phosphate and phosphoenolpyruvate: step 5/7. The protein operates within metabolic intermediate biosynthesis; chorismate biosynthesis; chorismate from D-erythrose 4-phosphate and phosphoenolpyruvate: step 6/7. Its function is as follows. The AROM polypeptide catalyzes 5 consecutive enzymatic reactions in prechorismate polyaromatic amino acid biosynthesis. The chain is Pentafunctional AROM polypeptide from Paracoccidioides brasiliensis (strain Pb18).